A 40-amino-acid chain; its full sequence is Beta/delta-ctenitoxin-Pr1a (40 aa).

4 cysteine pairs are disulfide-bonded: cysteine 1–cysteine 15, cysteine 8–cysteine 21, cysteine 14–cysteine 31, and cysteine 23–cysteine 29.

Belongs to the neurotoxin 03 (Tx2) family. 05 subfamily. Expressed by the venom gland.

It localises to the secreted. Potent insecticidal toxin that binds to two distinct sites in insect sodium channels, with close affinity (Kd1=34.7 pM and Kd2=35.1 pM). Its association is rather fast (1.4 and 8.5 minutes, respectively for sites 1 and 2) and its dissociation is a slower process (5.4 and 32.8 minutes, respectively). On rat brain synaptosomes the toxin partially competes (~30%) with the beta-toxin CssIV, but does not compete with the alpha-toxin AaII, nor with the beta-toxin Ts VII. On cockroach nerve cord synaptosomes, the toxin does not compete with the anti-insect toxin LqqIT1, but it competes with the 'alpha-like' toxin BomIV (IC(50)=80 pM). In cockroach neurons, the toxin inhibits the inactivation of sodium channels and it shifts the sodium channel activation to hyperpolarizing potentials. Hence, it behaves like an 'alpha-like' toxin and binds preferentially to site 3 on the insect Nav channel, located on the domain IV. The toxin may also inhibit the N-methyl-D-aspartate (NMDA)-subtype of ionotropic glutamate receptor (GRIN). In vivo, the toxin causes excitatory effects on insects. This Phoneutria reidyi (Brazilian Amazonian armed spider) protein is Beta/delta-ctenitoxin-Pr1a.